The chain runs to 80 residues: MAERSQNLQDLFLNTVRKQKISLTIFLINGVKLTGVVTSFDNFCVLLRRDGHSQLVYKHAISTIMPGQPLQMFENEEAAS.

The region spanning 10 to 70 (DLFLNTVRKQ…ISTIMPGQPL (61 aa)) is the Sm domain.

This sequence belongs to the Hfq family. In terms of assembly, homohexamer.

Functionally, RNA chaperone that binds small regulatory RNA (sRNAs) and mRNAs to facilitate mRNA translational regulation in response to envelope stress, environmental stress and changes in metabolite concentrations. Also binds with high specificity to tRNAs. The chain is RNA-binding protein Hfq from Rhizobium meliloti (strain 1021) (Ensifer meliloti).